We begin with the raw amino-acid sequence, 120 residues long: MHAFSKIRLTFNQDDPQSHEDDSAGIAVQDAKPTLQAPPMYKVVLFNDDYTPMDFVVEVLEVFFNLNRELATKVMLAVHTEGRAVCGLFTRDIAETKAMQVNQYARESQHPLLCEIEKDG.

This sequence belongs to the ClpS family. As to quaternary structure, binds to the N-terminal domain of the chaperone ClpA.

In terms of biological role, involved in the modulation of the specificity of the ClpAP-mediated ATP-dependent protein degradation. The sequence is that of ATP-dependent Clp protease adapter protein ClpS from Pseudomonas syringae pv. syringae (strain B728a).